An 874-amino-acid polypeptide reads, in one-letter code: Chaperone protein ClpB 1 (874 aa).

Residues 6–148 enclose the Clp R domain; that stretch reads PNQFTEKAWE…RQIIQQIRGS (143 aa). Repeat regions lie at residues 9–73 and 85–148; these read FTEK…IARQ and LGRS…IRGS. Positions 161–342 are NBD1; that stretch reads EALEKYGRDL…RRFQQVFVDQ (182 aa). 208–215 serves as a coordination point for ATP; that stretch reads GEPGVGKT. The linker stretch occupies residues 343 to 551; that stretch reads PTVEDTISIL…IAEIISKWTG (209 aa). Residues 393-527 adopt a coiled-coil conformation; the sequence is IDLVDESAAR…MEGGLATTHT (135 aa). Residues 561 to 772 form an NBD2 region; the sequence is EMQKLLNLDE…RVDETIIFHS (212 aa). 611–618 lines the ATP pocket; it reads GPTGVGKT. The interval 773 to 874 is C-terminal; the sequence is LRKDQLQQIV…IATPTAVPLS (102 aa).

It belongs to the ClpA/ClpB family. Homohexamer. The oligomerization is ATP-dependent.

The protein localises to the cytoplasm. Part of a stress-induced multi-chaperone system, it is involved in the recovery of the cell from heat-induced damage, in cooperation with DnaK, DnaJ and GrpE. Acts before DnaK, in the processing of protein aggregates. Protein binding stimulates the ATPase activity; ATP hydrolysis unfolds the denatured protein aggregates, which probably helps expose new hydrophobic binding sites on the surface of ClpB-bound aggregates, contributing to the solubilization and refolding of denatured protein aggregates by DnaK. Necessary for thermotolerance. This Synechococcus elongatus (strain ATCC 33912 / PCC 7942 / FACHB-805) (Anacystis nidulans R2) protein is Chaperone protein ClpB 1 (clpB1).